The primary structure comprises 1217 residues: ATP-dependent helicase/nuclease subunit A (1217 aa).

The UvrD-like helicase ATP-binding domain maps to 10 to 475 (VIWTDAQWQS…IDLSQNFRSR (466 aa)). Position 31 to 38 (31 to 38 (AAAGSGKT)) interacts with ATP. A UvrD-like helicase C-terminal domain is found at 476-786 (KEVLSTTNYI…RMMTIHSSKG (311 aa)).

This sequence belongs to the helicase family. AddA subfamily. As to quaternary structure, heterodimer of AddA and AddB/RexB. The cofactor is Mg(2+).

The catalysed reaction is Couples ATP hydrolysis with the unwinding of duplex DNA by translocating in the 3'-5' direction.. The enzyme catalyses ATP + H2O = ADP + phosphate + H(+). In terms of biological role, the heterodimer acts as both an ATP-dependent DNA helicase and an ATP-dependent, dual-direction single-stranded exonuclease. Recognizes the chi site generating a DNA molecule suitable for the initiation of homologous recombination. The AddA nuclease domain is required for chi fragment generation; this subunit has the helicase and 3' -&gt; 5' nuclease activities. The polypeptide is ATP-dependent helicase/nuclease subunit A (Staphylococcus aureus (strain MSSA476)).